The primary structure comprises 246 residues: 23S rRNA (guanosine-2'-O-)-methyltransferase RlmB (246 aa).

Residues Gly-197, Ile-217, and Leu-226 each coordinate S-adenosyl-L-methionine.

Belongs to the class IV-like SAM-binding methyltransferase superfamily. RNA methyltransferase TrmH family. RlmB subfamily.

It is found in the cytoplasm. It catalyses the reaction guanosine(2251) in 23S rRNA + S-adenosyl-L-methionine = 2'-O-methylguanosine(2251) in 23S rRNA + S-adenosyl-L-homocysteine + H(+). Specifically methylates the ribose of guanosine 2251 in 23S rRNA. This chain is 23S rRNA (guanosine-2'-O-)-methyltransferase RlmB, found in Haemophilus ducreyi (strain 35000HP / ATCC 700724).